The following is a 430-amino-acid chain: Asparagine--tRNA ligase (430 aa).

This sequence belongs to the class-II aminoacyl-tRNA synthetase family. As to quaternary structure, homodimer.

The protein localises to the cytoplasm. The catalysed reaction is tRNA(Asn) + L-asparagine + ATP = L-asparaginyl-tRNA(Asn) + AMP + diphosphate + H(+). The protein is Asparagine--tRNA ligase of Listeria monocytogenes serotype 4b (strain F2365).